The chain runs to 795 residues: Phenylalanine--tRNA ligase beta subunit (795 aa).

Residues 39–148 (ADEFHTVVVG…ADAPVGEDYR (110 aa)) enclose the tRNA-binding domain. One can recognise a B5 domain in the interval 401-476 (PKRDGITLRA…RVYGYNSIQA (76 aa)). The Mg(2+) site is built by aspartate 454, aspartate 460, glutamate 463, and glutamate 464. Residues 701-794 (SRYPSIRRDL…LKSEFNATLR (94 aa)) form the FDX-ACB domain.

The protein belongs to the phenylalanyl-tRNA synthetase beta subunit family. Type 1 subfamily. Tetramer of two alpha and two beta subunits. It depends on Mg(2+) as a cofactor.

It localises to the cytoplasm. It catalyses the reaction tRNA(Phe) + L-phenylalanine + ATP = L-phenylalanyl-tRNA(Phe) + AMP + diphosphate + H(+). The protein is Phenylalanine--tRNA ligase beta subunit of Idiomarina loihiensis (strain ATCC BAA-735 / DSM 15497 / L2-TR).